The primary structure comprises 203 residues: Outer-membrane lipoprotein carrier protein (203 aa).

The N-terminal stretch at 1–21 (MKKMAIACALLSSVVASSVWA) is a signal peptide. A disordered region spans residues 178–203 (QQNGAVEPSKFTFTPPQGVTIDDQRK).

This sequence belongs to the LolA family. As to quaternary structure, monomer.

Its subcellular location is the periplasm. Functionally, participates in the translocation of lipoproteins from the inner membrane to the outer membrane. Only forms a complex with a lipoprotein if the residue after the N-terminal Cys is not an aspartate (The Asp acts as a targeting signal to indicate that the lipoprotein should stay in the inner membrane). This Salmonella typhi protein is Outer-membrane lipoprotein carrier protein.